Reading from the N-terminus, the 246-residue chain is Putative S-adenosyl-L-methionine-dependent methyltransferase Mflv_0168 (246 aa).

S-adenosyl-L-methionine is bound by residues Asp112 and 141-142; that span reads DL.

Belongs to the UPF0677 family.

Functionally, exhibits S-adenosyl-L-methionine-dependent methyltransferase activity. The chain is Putative S-adenosyl-L-methionine-dependent methyltransferase Mflv_0168 from Mycolicibacterium gilvum (strain PYR-GCK) (Mycobacterium gilvum (strain PYR-GCK)).